The following is a 557-amino-acid chain: Syntaxin-binding protein 4 (557 aa).

A phosphoserine mark is found at Ser-10 and Ser-12. The PDZ domain occupies 19-105; that stretch reads AFRVITVTKE…RSESPWEIAF (87 aa). Ser-99 carries the phosphoserine; by PKB/AKT2 modification. Positions 142 to 154 are enriched in low complexity; the sequence is PSETLLPKTSSTP. The interval 142-214 is disordered; that stretch reads PSETLLPKTS…SGPQGKISLN (73 aa). Positions 179 to 194 are enriched in polar residues; that stretch reads SPITSLDNSPADTSNA. Position 216 is a phosphoserine (Ser-216). Residues 298-408 adopt a coiled-coil conformation; the sequence is ADEVGKLRQE…NKESVQDLRK (111 aa). Ser-467 is subject to Phosphoserine. A WW domain is found at 500-533; that stretch reads DCLPYGWEEAYTADGIKYFINHVTQTTSWIHPVM.

Interacts with STX4A. In terms of processing, phosphorylated on Ser-99 by PKB/AKT2 after insulin treatment. Phosphorylation on Ser-99 abolishes the interaction with STX4A. Detected in skeletal muscle, heart, testis, adipocytes and pancreatic islet cells.

It is found in the cytoplasm. Its function is as follows. Plays a role in the translocation of transport vesicles from the cytoplasm to the plasma membrane. Inhibits the translocation of SLC2A4 from intracellular vesicles to the plasma membrane by STX4A binding and preventing the interaction between STX4A and VAMP2. Stimulation with insulin disrupts the interaction with STX4A, leading to increased levels of SLC2A4 at the plasma membrane. May also play a role in the regulation of insulin release by pancreatic beta cells after stimulation by glucose. The sequence is that of Syntaxin-binding protein 4 (Stxbp4) from Mus musculus (Mouse).